We begin with the raw amino-acid sequence, 586 residues long: ATPase family AAA domain-containing protein 3A (586 aa).

2 disordered regions span residues 1–55 and 111–134; these read MSWL…PTGL and QAEE…QYQD. Serine 2 bears the N-acetylserine mark. Residues 2–50 form a required for interaction with the inner surface of the mitochondrial outer membrane region; that stretch reads SWLFGINKGPKGEGAGPPPPLPPAQPGAEGGGDRGLGDRPAPKDKWSNF. Residues 2–246 lie on the Mitochondrial intermembrane side of the membrane; sequence SWLFGINKGP…FRAFVTDWDK (245 aa). The segment covering 17–26 has biased composition (pro residues); sequence GPPPPLPPAQ. Basic and acidic residues-rich tracts occupy residues 32 to 48 and 111 to 125; these read GGDR…DKWS and QAEE…ETRQ. A coiled-coil region spans residues 86 to 219; it reads QLEQQSKLKE…QIRLKAAEHR (134 aa). A helical transmembrane segment spans residues 247 to 264; that stretch reads VTATVAGLTLLAVGVYSA. Over 265-586 the chain is Mitochondrial matrix; that stretch reads KNATLVAGRF…PGRGDEPSPS (322 aa). An S100B-binding region spans residues 290-305; the sequence is RITVLEALRHPIQVSR. Residue serine 321 is modified to Phosphoserine. 352-359 is an ATP binding site; sequence GPPGTGKT. An N6-acetyllysine modification is found at lysine 491.

Belongs to the AAA ATPase family. As to quaternary structure, can form homooligomers. Homodimer formation at the N-terminus may be regulated by ATP and is required for the interaction with the inner surface of the mitochondrial outer membrane and correct mitochondrial homeostasis. Interacts with components of the mitochondrial ribosome and with other proteins involved in mitochondrial RNA metabolism. May also interact with protein involved in lipid metabolism, including STARD9. May interact with FAM210A. Interacts with GADD45GIP1. Interacts with S100B in a Ca(+2)- and Zn(+2)-dependent manner; this interaction probably occurs in the cytosol prior to mitochondrial targeting. S100B could assist ATAD3A cytoplasmic processing, preventing aggregation and favoring mitochondrial localization. Interacts with HSP60/HSPD1. Forms heterooligomers with ATAD3B; this interaction may affect ATAD3A activity. Interacts with CLPB. Interacts with EIF2AK3/PERK; ATAD3A and EIF2S1/eIF-2-alpha occupy a common binding site within the cytoplasmic loop of EIF2AK3/PERK, leading to prevent EIF2AK3/PERK association with its substrate EIF2S1/eIF-2-alpha. In terms of tissue distribution, overexpressed in lung adenocarcinomas (at protein level).

It is found in the mitochondrion inner membrane. It localises to the mitochondrion matrix. The protein localises to the mitochondrion nucleoid. The enzyme catalyses ATP + H2O = ADP + phosphate + H(+). Functionally, essential for mitochondrial network organization, mitochondrial metabolism and cell growth at organism and cellular level. May play an important role in mitochondrial protein synthesis. May also participate in mitochondrial DNA replication. May bind to mitochondrial DNA D-loops and contribute to nucleoid stability. Required for enhanced channeling of cholesterol for hormone-dependent steroidogenesis. Involved in mitochondrial-mediated antiviral innate immunity. Required to protect mitochondria from the PERK-mediated unfolded protein response: specifically inhibits the activity of EIF2AK3/PERK at mitochondria-endoplasmic reticulum contact sites, thereby providing a safe haven for mitochondrial protein translation during endoplasmic reticulum stress. Ability to inhibit EIF2AK3/PERK is independent of its ATPase activity. Also involved in the mitochondrial DNA damage response by promoting signaling between damaged genomes and the mitochondrial membrane, leading to activation of the integrated stress response (ISR). This chain is ATPase family AAA domain-containing protein 3A, found in Homo sapiens (Human).